The following is a 454-amino-acid chain: Ribosomal protein uS12 methylthiotransferase RimO (454 aa).

Residues 14–125 (SKIAFSHVGC…IAKVLDRVEK (112 aa)) enclose the MTTase N-terminal domain. 6 residues coordinate [4Fe-4S] cluster: C23, C59, C88, C163, C167, and C170. Positions 149 to 378 (DKNKFVAYLR…ISVQQNISRE (230 aa)) constitute a Radical SAM core domain. Residues 381 to 452 (QIYVGSKMKI…EYDLYGETIK (72 aa)) form the TRAM domain.

Belongs to the methylthiotransferase family. RimO subfamily. [4Fe-4S] cluster is required as a cofactor.

It is found in the cytoplasm. It catalyses the reaction L-aspartate(89)-[ribosomal protein uS12]-hydrogen + (sulfur carrier)-SH + AH2 + 2 S-adenosyl-L-methionine = 3-methylsulfanyl-L-aspartate(89)-[ribosomal protein uS12]-hydrogen + (sulfur carrier)-H + 5'-deoxyadenosine + L-methionine + A + S-adenosyl-L-homocysteine + 2 H(+). Its function is as follows. Catalyzes the methylthiolation of an aspartic acid residue of ribosomal protein uS12. This Prochlorococcus marinus (strain MIT 9301) protein is Ribosomal protein uS12 methylthiotransferase RimO.